Consider the following 312-residue polypeptide: Olfactory receptor 7D4 (312 aa).

Residues M1–P25 are Extracellular-facing. N-linked (GlcNAc...) asparagine glycosylation is present at N5. A helical transmembrane segment spans residues V26–I46. Topologically, residues L47–H54 are cytoplasmic. Residues L55–S75 traverse the membrane as a helical segment. The Extracellular segment spans residues T76–T99. An intrachain disulfide couples C97 to C189. Residues Q100–Y120 form a helical membrane-spanning segment. The Cytoplasmic segment spans residues D121 to C139. Residues L140 to I160 form a helical membrane-spanning segment. The Extracellular portion of the chain corresponds to L161–I197. Residues V198–S217 form a helical membrane-spanning segment. The Cytoplasmic portion of the chain corresponds to Y218–A237. Residues F238–V258 traverse the membrane as a helical segment. Over Y259–S271 the chain is Extracellular. The chain crosses the membrane as a helical span at residues S272–L292. The Cytoplasmic segment spans residues R293–P312.

It belongs to the G-protein coupled receptor 1 family. Nasal olfactory epithelium.

It is found in the cell membrane. Functionally, odorant receptor. Selectively activated by androstenone and the related odorous steroid androstadienone. The sequence is that of Olfactory receptor 7D4 (OR7D4) from Homo sapiens (Human).